Here is a 515-residue protein sequence, read N- to C-terminus: Glucose-6-phosphate 1-dehydrogenase 6, cytoplasmic (515 aa).

Residues 38–45, Arg-73, Tyr-155, and Lys-182 each bind NADP(+); that span reads GASGDLAK. D-glucose 6-phosphate is bound by residues Lys-182, 212 to 216, Glu-250, and Asp-269; that span reads HYLGK. Residue His-274 is the Proton acceptor of the active site. Lys-357 provides a ligand contact to NADP(+). Residues Lys-360 and Arg-365 each contribute to the D-glucose 6-phosphate site. The NADP(+) site is built by Lys-366, Arg-370, and Arg-394. Gln-396 lines the D-glucose 6-phosphate pocket. NADP(+) is bound by residues 402–404, 422–424, Arg-488, and Trp-510; these read YMK and DLS.

Belongs to the glucose-6-phosphate dehydrogenase family. In terms of assembly, forms homodimer. Expressed in roots, leaves, stems, buds, flowers and siliques.

The protein resides in the cytoplasm. It localises to the cytosol. It carries out the reaction D-glucose 6-phosphate + NADP(+) = 6-phospho-D-glucono-1,5-lactone + NADPH + H(+). It functions in the pathway carbohydrate degradation; pentose phosphate pathway; D-ribulose 5-phosphate from D-glucose 6-phosphate (oxidative stage): step 1/3. Regulated by metabolites. Functionally, catalyzes the rate-limiting step of the oxidative pentose-phosphate pathway, which represents a route for the dissimilation of carbohydrates besides glycolysis. The main function of this enzyme is to provide reducing power (NADPH) and pentose phosphates for fatty acid and nucleic acid synthesis which are involved in membrane synthesis and cell division. The chain is Glucose-6-phosphate 1-dehydrogenase 6, cytoplasmic from Arabidopsis thaliana (Mouse-ear cress).